The following is a 160-amino-acid chain: Myosin regulatory light chain, smooth muscle (160 aa).

A Blocked amino end (Ser) modification is found at serine 1. At serine 11 the chain carries Phosphoserine. 2 EF-hand domains span residues 20–55 and 88–123; these read NQIQ…LGTA and DPEE…MGDN. Residues aspartate 33, asparagine 35, aspartate 37, and aspartate 44 each coordinate Ca(2+).

Its function is as follows. In molluscan muscle, calcium regulation is associated with myosin rather than with actin. Muscle myosin contains two types of light chains: the catalytic light chain, essential for ATPase activity, and the regulatory light chain, a calcium-binding protein responsible for Ca(2+) dependent binding and Ca(2+) dependent Mg-ATPase activity. This chain is Myosin regulatory light chain, smooth muscle, found in Spisula sachalinensis (Sakhalin surf-clam).